Here is a 496-residue protein sequence, read N- to C-terminus: Ankyrin repeat domain-containing protein 53 (496 aa).

The segment covering 1-15 (MASAGSTARRAGSGS) has biased composition (low complexity). Residues 1-66 (MASAGSTARR…RPSEESDQTT (66 aa)) form a disordered region. A compositionally biased stretch (basic and acidic residues) spans 51–60 (AESKQPRPSE). ANK repeat units lie at residues 105 to 135 (KGFTAIHFAAQRGKLACLQVLVEEYKFPVNL), 139 to 172 (NSQTPLHLVIHKDNTTVALPCIYYLLEKGAALNA), and 176 to 205 (NGCTPLHLAVREGLLDCVKVLVQSGANVHA). The segment at 292-320 (LVSNTKQARATALSKTPEQRGSQCSSSFH) is disordered.

In terms of assembly, interacts with PSRC1; recruited by PSRC1 to the spindle during mitosis. In terms of processing, phosphorylated during mitosis.

It localises to the cytoplasm. The protein localises to the cytoskeleton. It is found in the spindle. The protein resides in the spindle pole. Required for normal progression through mitosis. Involved in chromosome alignment and cytokinesis via regulation of microtubules polymerization. The sequence is that of Ankyrin repeat domain-containing protein 53 (ANKRD53) from Macaca fascicularis (Crab-eating macaque).